Consider the following 66-residue polypeptide: Large ribosomal subunit protein bL33c (66 aa).

Belongs to the bacterial ribosomal protein bL33 family.

It localises to the plastid. The protein resides in the chloroplast. The polypeptide is Large ribosomal subunit protein bL33c (Citrus sinensis (Sweet orange)).